The sequence spans 352 residues: Dead end protein homolog 1 (352 aa).

RRM domains lie at 58–136 (SEVY…RSTE) and 138–218 (CELT…WLKP). Position 336 is an omega-N-methylarginine (Arg-336).

As to quaternary structure, interacts with APOBEC3. As to expression, isoform 1 and isoform 2 are expressed in testis. Isoform 1 is expressed continuously in post natal (PN) testis although levels are low between PN1 to PN6. Isoform 2 is expressed from PN 20 onwards. Isoform 2 is strongly expressed in meiotic and in post-meiotic germ cells of the testis with highest expression at the elongated spermatid stage (at protein level). Expressed in testis and heart. Expressed in germ cells and genital ridges. Not detected in testicular tumors.

It is found in the nucleus. Its subcellular location is the cytoplasm. Functionally, RNA-binding factor that positively regulates gene expression by prohibiting miRNA-mediated gene suppression. Relieves miRNA repression in germline cells. Prohibits the function of several miRNAs by blocking the accessibility of target mRNAs. Sequence-specific RNA-binding factor that binds specifically to U-rich regions (URRs) in the 3' untranslated region (3'-UTR) of several mRNAs. Does not bind to miRNAs. Isoform 1 may play a role during primordial germ cell (PGC) survival. However, does not seem to be essential for PGC migration. The sequence is that of Dead end protein homolog 1 (Dnd1) from Mus musculus (Mouse).